Reading from the N-terminus, the 106-residue chain is Small ribosomal subunit protein bS18 (106 aa).

A compositionally biased stretch (basic and acidic residues) spans 1–22 (MSEETTVRPERTERSERPERPQ). A disordered region spans residues 1-34 (MSEETTVRPERTERSERPERPQYRGNGPRKRRPF).

It belongs to the bacterial ribosomal protein bS18 family. As to quaternary structure, part of the 30S ribosomal subunit. Forms a tight heterodimer with protein bS6.

Its function is as follows. Binds as a heterodimer with protein bS6 to the central domain of the 16S rRNA, where it helps stabilize the platform of the 30S subunit. The chain is Small ribosomal subunit protein bS18 from Geobacter metallireducens (strain ATCC 53774 / DSM 7210 / GS-15).